Consider the following 460-residue polypeptide: Glutamate--tRNA ligase 2 (460 aa).

Residues 8–18 carry the 'HIGH' region motif; sequence PSPTGFLHVGG. The short motif at 237–241 is the 'KMSKS' region element; sequence KLSKR. Residue lysine 240 coordinates ATP.

The protein belongs to the class-I aminoacyl-tRNA synthetase family. Glutamate--tRNA ligase type 1 subfamily. Monomer.

The protein resides in the cytoplasm. The catalysed reaction is tRNA(Glu) + L-glutamate + ATP = L-glutamyl-tRNA(Glu) + AMP + diphosphate. Functionally, catalyzes the attachment of glutamate to tRNA(Glu) in a two-step reaction: glutamate is first activated by ATP to form Glu-AMP and then transferred to the acceptor end of tRNA(Glu). This chain is Glutamate--tRNA ligase 2, found in Campylobacter fetus subsp. fetus (strain 82-40).